The following is a 485-amino-acid chain: Glutamyl-tRNA(Gln) amidotransferase subunit A (485 aa).

Catalysis depends on charge relay system residues Lys-79 and Ser-154. The Acyl-ester intermediate role is filled by Ser-178.

This sequence belongs to the amidase family. GatA subfamily. As to quaternary structure, heterotrimer of A, B and C subunits.

It catalyses the reaction L-glutamyl-tRNA(Gln) + L-glutamine + ATP + H2O = L-glutaminyl-tRNA(Gln) + L-glutamate + ADP + phosphate + H(+). Allows the formation of correctly charged Gln-tRNA(Gln) through the transamidation of misacylated Glu-tRNA(Gln) in organisms which lack glutaminyl-tRNA synthetase. The reaction takes place in the presence of glutamine and ATP through an activated gamma-phospho-Glu-tRNA(Gln). The sequence is that of Glutamyl-tRNA(Gln) amidotransferase subunit A from Staphylococcus aureus (strain Mu3 / ATCC 700698).